The sequence spans 806 residues: ATP-dependent zinc metalloprotease FTSH 9, chloroplastic (806 aa).

The N-terminal 62 residues, 1-62 (MTSIELLSPL…SSIQLPQSVP (62 aa)), are a transit peptide targeting the chloroplast. The disordered stretch occupies residues 84 to 116 (SSRTIVNCQEGDQKASSSEGEGKTNKDKGRKQG). 2 consecutive transmembrane segments (helical) span residues 133-153 (IIQA…MFVV) and 271-291 (GGFF…AGLL). Residue 369-376 (GLPGTGKT) participates in ATP binding. His-594 lines the Zn(2+) pocket. The active site involves Glu-595. Residues His-598 and Asp-677 each contribute to the Zn(2+) site.

This sequence in the N-terminal section; belongs to the AAA ATPase family. In the C-terminal section; belongs to the peptidase M41 family. The cofactor is Zn(2+).

It is found in the plastid. The protein resides in the chloroplast thylakoid membrane. Its function is as follows. Probable ATP-dependent zinc metallopeptidase. The sequence is that of ATP-dependent zinc metalloprotease FTSH 9, chloroplastic (FTSH9) from Arabidopsis thaliana (Mouse-ear cress).